The chain runs to 969 residues: Bifunctional glutamine synthetase adenylyltransferase/adenylyl-removing enzyme (969 aa).

The adenylyl removase stretch occupies residues 1–456 (MNWQANIHKL…HFEQLFAAPH (456 aa)). An adenylyl transferase region spans residues 466 to 969 (EKRLAEVWLG…SALLEDESAK (504 aa)).

The protein belongs to the GlnE family. Mg(2+) serves as cofactor.

It carries out the reaction [glutamine synthetase]-O(4)-(5'-adenylyl)-L-tyrosine + phosphate = [glutamine synthetase]-L-tyrosine + ADP. It catalyses the reaction [glutamine synthetase]-L-tyrosine + ATP = [glutamine synthetase]-O(4)-(5'-adenylyl)-L-tyrosine + diphosphate. In terms of biological role, involved in the regulation of glutamine synthetase GlnA, a key enzyme in the process to assimilate ammonia. When cellular nitrogen levels are high, the C-terminal adenylyl transferase (AT) inactivates GlnA by covalent transfer of an adenylyl group from ATP to specific tyrosine residue of GlnA, thus reducing its activity. Conversely, when nitrogen levels are low, the N-terminal adenylyl removase (AR) activates GlnA by removing the adenylyl group by phosphorolysis, increasing its activity. The regulatory region of GlnE binds the signal transduction protein PII (GlnB) which indicates the nitrogen status of the cell. In Nitrosococcus oceani (strain ATCC 19707 / BCRC 17464 / JCM 30415 / NCIMB 11848 / C-107), this protein is Bifunctional glutamine synthetase adenylyltransferase/adenylyl-removing enzyme.